The sequence spans 680 residues: DNA-directed RNA polymerase subunit beta' (680 aa).

The Zn(2+) site is built by Cys69, Cys71, Cys87, and Cys90. Asp489, Asp491, and Asp493 together coordinate Mg(2+).

It belongs to the RNA polymerase beta' chain family. RpoC1 subfamily. As to quaternary structure, in plastids the minimal PEP RNA polymerase catalytic core is composed of four subunits: alpha, beta, beta', and beta''. When a (nuclear-encoded) sigma factor is associated with the core the holoenzyme is formed, which can initiate transcription. The cofactor is Mg(2+). It depends on Zn(2+) as a cofactor.

It is found in the plastid. The protein resides in the chloroplast. It catalyses the reaction RNA(n) + a ribonucleoside 5'-triphosphate = RNA(n+1) + diphosphate. Functionally, DNA-dependent RNA polymerase catalyzes the transcription of DNA into RNA using the four ribonucleoside triphosphates as substrates. This chain is DNA-directed RNA polymerase subunit beta', found in Olimarabidopsis pumila (Dwarf rocket).